The following is a 392-amino-acid chain: Formate-dependent phosphoribosylglycinamide formyltransferase (392 aa).

N(1)-(5-phospho-beta-D-ribosyl)glycinamide contacts are provided by residues 22 to 23 (EL) and Glu-82. ATP-binding positions include Arg-114, Lys-155, 160–165 (SSGKGQ), 195–198 (EKII), and Glu-203. The ATP-grasp domain occupies 119–308 (VLVSKKLNIL…EFALHVRSFL (190 aa)). Mg(2+)-binding residues include Glu-267 and Glu-279. N(1)-(5-phospho-beta-D-ribosyl)glycinamide is bound by residues Asp-286, Lys-355, and 362 to 363 (RR).

This sequence belongs to the PurK/PurT family. Homodimer.

It carries out the reaction N(1)-(5-phospho-beta-D-ribosyl)glycinamide + formate + ATP = N(2)-formyl-N(1)-(5-phospho-beta-D-ribosyl)glycinamide + ADP + phosphate + H(+). Its pathway is purine metabolism; IMP biosynthesis via de novo pathway; N(2)-formyl-N(1)-(5-phospho-D-ribosyl)glycinamide from N(1)-(5-phospho-D-ribosyl)glycinamide (formate route): step 1/1. Its function is as follows. Involved in the de novo purine biosynthesis. Catalyzes the transfer of formate to 5-phospho-ribosyl-glycinamide (GAR), producing 5-phospho-ribosyl-N-formylglycinamide (FGAR). Formate is provided by PurU via hydrolysis of 10-formyl-tetrahydrofolate. This Wigglesworthia glossinidia brevipalpis protein is Formate-dependent phosphoribosylglycinamide formyltransferase.